Consider the following 365-residue polypeptide: Peptide chain release factor 2 (365 aa).

Q252 bears the N5-methylglutamine mark.

It belongs to the prokaryotic/mitochondrial release factor family. Post-translationally, methylated by PrmC. Methylation increases the termination efficiency of RF2.

Its subcellular location is the cytoplasm. In terms of biological role, peptide chain release factor 2 directs the termination of translation in response to the peptide chain termination codons UGA and UAA. In Acidithiobacillus ferrooxidans (strain ATCC 23270 / DSM 14882 / CIP 104768 / NCIMB 8455) (Ferrobacillus ferrooxidans (strain ATCC 23270)), this protein is Peptide chain release factor 2.